Consider the following 373-residue polypeptide: Probable quinol oxidase subunit 2 (373 aa).

The N-terminal stretch at methionine 1–glycine 19 is a signal peptide. Cysteine 20 is lipidated: N-palmitoyl cysteine. Cysteine 20 carries S-diacylglycerol cysteine lipidation. Helical transmembrane passes span phenylalanine 38–phenylalanine 58 and leucine 82–valine 102. 2 stretches are compositionally biased toward basic and acidic residues: residues glutamate 292–glycine 320 and glutamate 339–histidine 373. Residues glutamate 292–histidine 373 form a disordered region.

The protein belongs to the cytochrome c oxidase subunit 2 family.

It is found in the cell membrane. It carries out the reaction 2 a quinol + O2 = 2 a quinone + 2 H2O. Functionally, catalyzes quinol oxidation with the concomitant reduction of oxygen to water. Subunit II transfers the electrons from a quinol to the binuclear center of the catalytic subunit I. The protein is Probable quinol oxidase subunit 2 (qoxA) of Staphylococcus saprophyticus subsp. saprophyticus (strain ATCC 15305 / DSM 20229 / NCIMB 8711 / NCTC 7292 / S-41).